The primary structure comprises 536 residues: Heparanase-like protein 3 (536 aa).

The signal sequence occupies residues 1 to 24 (MAYRQILAIVLFLCVFQFLDCTVS). N-linked (GlcNAc...) asparagine glycans are attached at residues Asn-30, Asn-122, Asn-176, and Asn-191. The active-site Proton donor is the Glu-202. Residues Asn-265 and Asn-308 are each glycosylated (N-linked (GlcNAc...) asparagine). Catalysis depends on Glu-319, which acts as the Nucleophile. N-linked (GlcNAc...) asparagine glycans are attached at residues Asn-370, Asn-427, Asn-438, and Asn-510.

This sequence belongs to the glycosyl hydrolase 79 family.

Its subcellular location is the lysosome membrane. It is found in the secreted. Endoglycosidase which is a cell surface and extracellular matrix-degrading enzyme. Cleaves heparan sulfate proteoglycans (HSPGs) into heparan sulfate side chains and core proteoglycans. The chain is Heparanase-like protein 3 from Arabidopsis thaliana (Mouse-ear cress).